The sequence spans 351 residues: 7,8-didemethyl-8-hydroxy-5-deazariboflavin synthase (351 aa).

The region spanning 35–275 (ITYSKNAFIP…EDISIQVPPN (241 aa)) is the Radical SAM core domain. Cys-49, Cys-53, and Cys-56 together coordinate [4Fe-4S] cluster.

It belongs to the radical SAM superfamily. CofG family. In terms of assembly, consists of two subunits, CofG and CofH. The cofactor is [4Fe-4S] cluster.

The enzyme catalyses 5-amino-5-(4-hydroxybenzyl)-6-(D-ribitylimino)-5,6-dihydrouracil + S-adenosyl-L-methionine = 7,8-didemethyl-8-hydroxy-5-deazariboflavin + 5'-deoxyadenosine + L-methionine + NH4(+) + H(+). It functions in the pathway cofactor biosynthesis; coenzyme F0 biosynthesis. Catalyzes the radical-mediated synthesis of 7,8-didemethyl-8-hydroxy-5-deazariboflavin from 5-amino-5-(4-hydroxybenzyl)-6-(D-ribitylimino)-5,6-dihydrouracil. The polypeptide is 7,8-didemethyl-8-hydroxy-5-deazariboflavin synthase (Methanococcus vannielii (strain ATCC 35089 / DSM 1224 / JCM 13029 / OCM 148 / SB)).